The following is a 479-amino-acid chain: Long-chain acyl-protein thioester reductase (479 aa).

It belongs to the LuxC family.

The catalysed reaction is a long-chain fatty aldehyde + NADP(+) + CoA = a long-chain fatty acyl-CoA + NADPH + H(+). The protein operates within lipid metabolism; fatty acid reduction for biolumincescence. Functionally, luxC is the fatty acid reductase enzyme responsible for synthesis of the aldehyde substrate for the luminescent reaction catalyzed by luciferase. The protein is Long-chain acyl-protein thioester reductase (luxC) of Aliivibrio fischeri (Vibrio fischeri).